The primary structure comprises 658 residues: Glycogen debranching enzyme (658 aa).

The active-site Nucleophile is Asp335. Glu370 acts as the Proton donor in catalysis. Over residues 457 to 468 (NDANGEGNRDGT) the composition is skewed to basic and acidic residues. Residues 457-481 (NDANGEGNRDGTDSNFSNNHGTEGL) form a disordered region.

It belongs to the glycosyl hydrolase 13 family.

The enzyme catalyses Hydrolysis of (1-&gt;6)-alpha-D-glucosidic linkages to branches with degrees of polymerization of three or four glucose residues in limit dextrin.. Its pathway is glycan degradation; glycogen degradation. In terms of biological role, removes maltotriose and maltotetraose chains that are attached by 1,6-alpha-linkage to the limit dextrin main chain, generating a debranched limit dextrin. The protein is Glycogen debranching enzyme of Pectobacterium atrosepticum (strain SCRI 1043 / ATCC BAA-672) (Erwinia carotovora subsp. atroseptica).